Reading from the N-terminus, the 214-residue chain is Large ribosomal subunit protein uL4c (214 aa).

The tract at residues 43–80 (KQSNEKRQGSANTKTRSEVRGGGRKPWRQKGTGRARAG) is disordered. A compositionally biased stretch (basic residues) spans 64 to 75 (GGRKPWRQKGTG).

This sequence belongs to the universal ribosomal protein uL4 family. As to quaternary structure, part of the 50S ribosomal subunit.

The protein localises to the plastid. It localises to the chloroplast. Probably binds the 23S rRNA. The sequence is that of Large ribosomal subunit protein uL4c (rpl4) from Porphyra purpurea (Red seaweed).